The primary structure comprises 268 residues: Large ribosomal subunit protein uL4 (268 aa).

Belongs to the universal ribosomal protein uL4 family. In terms of assembly, part of the 50S ribosomal subunit.

Its function is as follows. One of the primary rRNA binding proteins, this protein initially binds near the 5'-end of the 23S rRNA. It is important during the early stages of 50S assembly. It makes multiple contacts with different domains of the 23S rRNA in the assembled 50S subunit and ribosome. Functionally, forms part of the polypeptide exit tunnel. The chain is Large ribosomal subunit protein uL4 from Nanoarchaeum equitans (strain Kin4-M).